We begin with the raw amino-acid sequence, 242 residues long: 7-cyano-7-deazaguanine synthase (242 aa).

Residue 14-24 (FSGGQDSATCL) participates in ATP binding. Cys202, Cys217, Cys220, and Cys223 together coordinate Zn(2+).

This sequence belongs to the QueC family. It depends on Zn(2+) as a cofactor.

It catalyses the reaction 7-carboxy-7-deazaguanine + NH4(+) + ATP = 7-cyano-7-deazaguanine + ADP + phosphate + H2O + H(+). It functions in the pathway purine metabolism; 7-cyano-7-deazaguanine biosynthesis. Catalyzes the ATP-dependent conversion of 7-carboxy-7-deazaguanine (CDG) to 7-cyano-7-deazaguanine (preQ(0)). The sequence is that of 7-cyano-7-deazaguanine synthase from Rhodopseudomonas palustris (strain BisA53).